Consider the following 307-residue polypeptide: MSEEKPTVRTEEDDRYEDDAGDLDLGQIGSRVWLVKIPKFLMDKWNSIPEDDAANLGCVRVKNDEIQLLLQNSPENADVPKIYNLRVMNKFVRNSYVFRESETSSSMKSTALVGTVAHECNVSPVINDDYRRVMQKRALAASAPKRKVQMIDDRGGSLLAPGTLGSRSRSTTSFIRNVKPRTGEGLKNSRIPRNELLDILFKCFEDYEYWTLKGLREYVKQPEVYLKEVLDSIAILNKRGPYALKYSLKPEYKGTMDAASVELRNQQASQSESSSIDHTGKNTSPDNPGTNAEEDEDDDGVEMIDVV.

Basic and acidic residues predominate over residues 1–12 (MSEEKPTVRTEE). Disordered stretches follow at residues 1 to 22 (MSEEKPTVRTEEDDRYEDDAGD) and 261 to 307 (VELR…IDVV). The span at 13-22 (DDRYEDDAGD) shows a compositional bias: acidic residues. A compositionally biased stretch (polar residues) spans 263-290 (LRNQQASQSESSSIDHTGKNTSPDNPGT). The span at 292–307 (AEEDEDDDGVEMIDVV) shows a compositional bias: acidic residues.

It belongs to the TFIIF beta subunit family. As to quaternary structure, component of the fcp1/TFIIF/polII complex via interaction of tfg3 with both tfg1/TFIIF-alpha and tfg2/TFIIF-beta subunits.

It localises to the nucleus. Functionally, TFIIF is a general transcription initiation factor that binds to RNA polymerase II and helps to recruit it to the initiation complex in collaboration with TFIIB. It promotes transcription elongation. In Schizosaccharomyces pombe (strain 972 / ATCC 24843) (Fission yeast), this protein is Transcription initiation factor IIF subunit beta (tfg2).